The chain runs to 980 residues: Valine--tRNA ligase (980 aa).

The short motif at 43–53 (PNVTGTLHMGH) is the 'HIGH' region element. A 'KMSKS' region motif is present at residues 586–590 (KMSKS). Lys-589 serves as a coordination point for ATP. Residues 914–978 (LVDMDAERTR…QLTGLREQRA (65 aa)) adopt a coiled-coil conformation.

This sequence belongs to the class-I aminoacyl-tRNA synthetase family. ValS type 1 subfamily. As to quaternary structure, monomer.

It is found in the cytoplasm. The enzyme catalyses tRNA(Val) + L-valine + ATP = L-valyl-tRNA(Val) + AMP + diphosphate. Catalyzes the attachment of valine to tRNA(Val). As ValRS can inadvertently accommodate and process structurally similar amino acids such as threonine, to avoid such errors, it has a 'posttransfer' editing activity that hydrolyzes mischarged Thr-tRNA(Val) in a tRNA-dependent manner. This Xanthomonas euvesicatoria pv. vesicatoria (strain 85-10) (Xanthomonas campestris pv. vesicatoria) protein is Valine--tRNA ligase.